Here is a 101-residue protein sequence, read N- to C-terminus: Urease subunit beta (101 aa).

It belongs to the urease beta subunit family. Heterotrimer of UreA (gamma), UreB (beta) and UreC (alpha) subunits. Three heterotrimers associate to form the active enzyme.

Its subcellular location is the cytoplasm. The catalysed reaction is urea + 2 H2O + H(+) = hydrogencarbonate + 2 NH4(+). It functions in the pathway nitrogen metabolism; urea degradation; CO(2) and NH(3) from urea (urease route): step 1/1. In Pseudomonas aeruginosa (strain LESB58), this protein is Urease subunit beta.